We begin with the raw amino-acid sequence, 184 residues long: Ras-related protein Rap1 (184 aa).

10 to 17 (GSGGVGKS) provides a ligand contact to GTP. Positions 32-40 (YDPTIEDSY) match the Effector region motif. Residues 57–61 (DTAGT) and 116–119 (NKCD) contribute to the GTP site. A Cysteine methyl ester modification is found at cysteine 181. The S-geranylgeranyl cysteine moiety is linked to residue cysteine 181. The propeptide at 182-184 (VLL) is removed in mature form.

It belongs to the small GTPase superfamily. Ras family.

The protein resides in the cell membrane. It catalyses the reaction GTP + H2O = GDP + phosphate + H(+). Its activity is regulated as follows. Alternates between an inactive form bound to GDP and an active form bound to GTP. Activated by a guanine nucleotide-exchange factor (GEF) and inactivated by a GTPase-activating protein (GAP). In terms of biological role, ras proteins bind GDP/GTP and possess intrinsic GTPase activity. Plays a role in photoreceptor cell determination. This is Ras-related protein Rap1 from Drosophila melanogaster (Fruit fly).